We begin with the raw amino-acid sequence, 683 residues long: Receptor-like serine/threonine-protein kinase At2g45590 (683 aa).

Positions 1 to 21 are disordered; that stretch reads MPSRLSPPDIPPLQPTPTVSD. The Extracellular portion of the chain corresponds to 1-30; that stretch reads MPSRLSPPDIPPLQPTPTVSDGHHRFQTLP. Residues 31–51 traverse the membrane as a helical segment; sequence LIIAGSLTLTGVLLILVTLLI. Residues 52 to 683 are Cytoplasmic-facing; the sequence is YRRLYRNRTA…FPFKSRKKAR (632 aa). Positions 92-664 constitute a Protein kinase domain; the sequence is FSESTHLGHG…GVSEPPHLPF (573 aa). ATP-binding positions include 98–106 and Lys-121; that span reads LGHGGFGSV. The active-site Proton acceptor is the Asp-223. Residues 406–436 are disordered; that stretch reads ERPSNNKEWINNGDGSSSVSKKKKKEKKRKP. A compositionally biased stretch (polar residues) spans 411–424; the sequence is NKEWINNGDGSSSV. The span at 425–436 shows a compositional bias: basic residues; it reads SKKKKKEKKRKP.

Belongs to the protein kinase superfamily. Ser/Thr protein kinase family.

It localises to the cell membrane. It carries out the reaction L-seryl-[protein] + ATP = O-phospho-L-seryl-[protein] + ADP + H(+). The enzyme catalyses L-threonyl-[protein] + ATP = O-phospho-L-threonyl-[protein] + ADP + H(+). In Arabidopsis thaliana (Mouse-ear cress), this protein is Receptor-like serine/threonine-protein kinase At2g45590.